The chain runs to 1356 residues: Pleckstrin homology domain-containing family H member 1 (1356 aa).

The stretch at 27–172 forms a coiled coil; it reads FRLQASKIRE…QDALEDLRMT (146 aa). Disordered regions lie at residues 179 to 203, 256 to 314, and 354 to 414; these read VVPE…EQDS, HLQK…PKVR, and LHSP…PPLH. Composition is skewed to polar residues over residues 194–203, 256–265, and 285–297; these read PSDQPVEQDS, HLQKEGSPSQ, and VTAQ…GTKT. A coiled-coil region spans residues 359-407; it reads SSKSEARAKVREEAEKMEMEALPPSGKQEERESLKSRRGELEDVELENK. Basic and acidic residues-rich tracts occupy residues 362-377 and 385-399; these read SEAR…KMEM and KQEE…RGEL. Residue serine 451 is modified to Phosphoserine. PH domains follow at residues 572-666 and 681-790; these read ALEK…SLLK and KPTV…VAAG. Serine 739 is modified (phosphoserine). The MyTH4 domain occupies 826–980; the sequence is YSQEGLCASL…PSRMEVVSIL (155 aa). One can recognise an FERM domain in the interval 991–1327; that stretch reads FSIPVHFANG…NHCSATVNLS (337 aa).

The chain is Pleckstrin homology domain-containing family H member 1 (Plekhh1) from Mus musculus (Mouse).